The chain runs to 376 residues: Lipid-A-disaccharide synthase (376 aa).

Belongs to the LpxB family.

It catalyses the reaction a lipid X + a UDP-2-N,3-O-bis[(3R)-3-hydroxyacyl]-alpha-D-glucosamine = a lipid A disaccharide + UDP + H(+). Its pathway is bacterial outer membrane biogenesis; LPS lipid A biosynthesis. Its function is as follows. Condensation of UDP-2,3-diacylglucosamine and 2,3-diacylglucosamine-1-phosphate to form lipid A disaccharide, a precursor of lipid A, a phosphorylated glycolipid that anchors the lipopolysaccharide to the outer membrane of the cell. This chain is Lipid-A-disaccharide synthase, found in Pseudomonas fluorescens (strain Pf0-1).